Consider the following 150-residue polypeptide: L-alanine exporter AlaE (150 aa).

Helical transmembrane passes span 17 to 37 (FAMVVFCFITGMFIEILISGM), 48 to 68 (LSIPVNIAIAWPYGVFRDFML), 86 to 106 (LVAYVTFQSPAYAMILLVVGA), and 111 to 131 (IITAVSSNVVVSCVMGVFYGY).

This sequence belongs to the AlaE exporter family.

The protein localises to the cell inner membrane. In terms of biological role, exports L-alanine. This is L-alanine exporter AlaE from Aliivibrio fischeri (strain ATCC 700601 / ES114) (Vibrio fischeri).